The following is a 523-amino-acid chain: GMP synthase [glutamine-hydrolyzing] (523 aa).

Residues 8–205 (KILILDFGSQ…VVNICGCATN (198 aa)) enclose the Glutamine amidotransferase type-1 domain. Residue cysteine 85 is the Nucleophile of the active site. Active-site residues include histidine 179 and glutamate 181. Residues 206–398 (WTPENIIEDA…LGLPAEMLNR (193 aa)) form the GMPS ATP-PPase domain. Position 233-239 (233-239 (SGGVDSS)) interacts with ATP.

As to quaternary structure, homodimer.

The catalysed reaction is XMP + L-glutamine + ATP + H2O = GMP + L-glutamate + AMP + diphosphate + 2 H(+). It participates in purine metabolism; GMP biosynthesis; GMP from XMP (L-Gln route): step 1/1. Catalyzes the synthesis of GMP from XMP. The polypeptide is GMP synthase [glutamine-hydrolyzing] (Actinobacillus succinogenes (strain ATCC 55618 / DSM 22257 / CCUG 43843 / 130Z)).